Here is a 248-residue protein sequence, read N- to C-terminus: NADP-dependent 3-hydroxy acid dehydrogenase YdfG (248 aa).

Residues 7–12, 32–33, 54–55, and Asn81 each bind NADP(+); these read GATAGF, RR, and DV. Ser134 contributes to the substrate binding site. Residues Tyr147, Lys151, and 177–185 contribute to the NADP(+) site; that span reads PGLVGGTEF. Tyr147 (proton acceptor) is an active-site residue.

The protein belongs to the short-chain dehydrogenases/reductases (SDR) family. As to quaternary structure, homotetramer.

The enzyme catalyses 3-hydroxypropanoate + NADP(+) = 3-oxopropanoate + NADPH + H(+). It catalyses the reaction L-allo-threonine + NADP(+) = aminoacetone + CO2 + NADPH. NADP-dependent dehydrogenase with broad substrate specificity acting on 3-hydroxy acids. Catalyzes the NADP-dependent oxidation of L-allo-threonine to L-2-amino-3-keto-butyrate, which is spontaneously decarboxylated into aminoacetone. Also acts on D-threonine, L-serine, D-serine, D-3-hydroxyisobutyrate, L-3-hydroxyisobutyrate, D-glycerate and L-glycerate. Able to catalyze the reduction of the malonic semialdehyde to 3-hydroxypropionic acid. YdfG is apparently supplementing RutE, the presumed malonic semialdehyde reductase involved in pyrimidine degradation since both are able to detoxify malonic semialdehyde. The polypeptide is NADP-dependent 3-hydroxy acid dehydrogenase YdfG (Escherichia coli (strain K12)).